A 528-amino-acid chain; its full sequence is Protein MGF 505-7R (528 aa).

ANK repeat units follow at residues 129 to 158 (ECDLSCLLQHAVKYNMLSILVKYKEDLLNV), 261 to 290 (HVNRALSYAVTQNKRKILDHVVRQKNVPHK), and 292 to 322 (IERMLHLAVKKHAPRKTLNLLLSYINYKVKN).

Belongs to the asfivirus MGF 505 family. Interacts with host STING1. Interacts with host JAK1; this interaction leads to JAK1 degradation. Interacts with host JAK2; this interaction leads to JAK2 degradation. Interacts with host RELA; this interaction inhibits NF-kappa-B promoter activity.

Its subcellular location is the host cytoplasm. In terms of biological role, plays a role in virus cell tropism, and may be required for efficient virus replication in macrophages. Interferes with host NF-kappa-B promoter activity mediated by TLR8. Mechanistically, inhibits the phosphorylation and subsequent nuclear translocation of host NF-kappa-B RELA subunit downstream of TLR8. Promotes the expression of the autophagy-related protein host ULK1 to degrade host STING and inhibit the interferon response. Also inhibits JAK1- and JAK2-mediated signaling and thus negatively regulates the IFN-gamma signaling. This is Protein MGF 505-7R from Ornithodoros (relapsing fever ticks).